Consider the following 412-residue polypeptide: Tryptophan synthase beta chain (412 aa).

Lys92 bears the N6-(pyridoxal phosphate)lysine mark.

This sequence belongs to the TrpB family. Tetramer of two alpha and two beta chains. Pyridoxal 5'-phosphate is required as a cofactor.

It carries out the reaction (1S,2R)-1-C-(indol-3-yl)glycerol 3-phosphate + L-serine = D-glyceraldehyde 3-phosphate + L-tryptophan + H2O. It functions in the pathway amino-acid biosynthesis; L-tryptophan biosynthesis; L-tryptophan from chorismate: step 5/5. In terms of biological role, the beta subunit is responsible for the synthesis of L-tryptophan from indole and L-serine. This is Tryptophan synthase beta chain from Methylibium petroleiphilum (strain ATCC BAA-1232 / LMG 22953 / PM1).